We begin with the raw amino-acid sequence, 183 residues long: uncharacterized protein (183 aa).

The protein belongs to the asfivirus S183L family.

This is an uncharacterized protein from African swine fever virus (isolate Warthog/Namibia/Wart80/1980) (ASFV).